The chain runs to 283 residues: Shikimate dehydrogenase (NADP(+)) (283 aa).

Residues 16-18 and Thr63 contribute to the shikimate site; that span reads SLS. The active-site Proton acceptor is the Lys67. Asp79 contributes to the NADP(+) binding site. Shikimate is bound by residues Asn88 and Asp103. NADP(+) is bound by residues 128–132, Ala223, and Gly243; that span reads GAGGA.

The protein belongs to the shikimate dehydrogenase family. Homodimer.

It carries out the reaction shikimate + NADP(+) = 3-dehydroshikimate + NADPH + H(+). It participates in metabolic intermediate biosynthesis; chorismate biosynthesis; chorismate from D-erythrose 4-phosphate and phosphoenolpyruvate: step 4/7. Functionally, involved in the biosynthesis of the chorismate, which leads to the biosynthesis of aromatic amino acids. Catalyzes the reversible NADPH linked reduction of 3-dehydroshikimate (DHSA) to yield shikimate (SA). This is Shikimate dehydrogenase (NADP(+)) from Xanthomonas campestris pv. campestris (strain 8004).